The chain runs to 652 residues: DNA ligase (652 aa).

NAD(+) is bound by residues 29–33 (DSEYD), 78–79 (SL), and E107. Catalysis depends on K109, which acts as the N6-AMP-lysine intermediate. Residues R130, E164, K278, and K302 each contribute to the NAD(+) site. Zn(2+)-binding residues include C395, C398, C413, and C418. Residues 577 to 652 (AADAALSGMT…IRDEDWLDSL (76 aa)) enclose the BRCT domain.

The protein belongs to the NAD-dependent DNA ligase family. LigA subfamily. The cofactor is Mg(2+). Requires Mn(2+) as cofactor.

It carries out the reaction NAD(+) + (deoxyribonucleotide)n-3'-hydroxyl + 5'-phospho-(deoxyribonucleotide)m = (deoxyribonucleotide)n+m + AMP + beta-nicotinamide D-nucleotide.. DNA ligase that catalyzes the formation of phosphodiester linkages between 5'-phosphoryl and 3'-hydroxyl groups in double-stranded DNA using NAD as a coenzyme and as the energy source for the reaction. It is essential for DNA replication and repair of damaged DNA. The polypeptide is DNA ligase (Streptococcus sanguinis (strain SK36)).